Reading from the N-terminus, the 106-residue chain is Immunoglobulin lambda constant 2 (106 aa).

The Ig-like domain maps to 7–101 (PSVTLFPPSS…EGSTVEKTVA (95 aa)). Residues cysteine 28 and cysteine 87 are joined by a disulfide bond.

As to quaternary structure, immunoglobulins are composed of two identical heavy chains and two identical light chains; disulfide-linked.

It localises to the secreted. The protein localises to the cell membrane. In terms of biological role, constant region of immunoglobulin light chains. Immunoglobulins, also known as antibodies, are membrane-bound or secreted glycoproteins produced by B lymphocytes. In the recognition phase of humoral immunity, the membrane-bound immunoglobulins serve as receptors which, upon binding of a specific antigen, trigger the clonal expansion and differentiation of B lymphocytes into immunoglobulins-secreting plasma cells. Secreted immunoglobulins mediate the effector phase of humoral immunity, which results in the elimination of bound antigens. The antigen binding site is formed by the variable domain of one heavy chain, together with that of its associated light chain. Thus, each immunoglobulin has two antigen binding sites with remarkable affinity for a particular antigen. The variable domains are assembled by a process called V-(D)-J rearrangement and can then be subjected to somatic hypermutations which, after exposure to antigen and selection, allow affinity maturation for a particular antigen. This chain is Immunoglobulin lambda constant 2, found in Homo sapiens (Human).